A 169-amino-acid chain; its full sequence is Putative hydrolase 111R (169 aa).

In terms of domain architecture, Nudix hydrolase spans 46–169 (FEKRKAGVFV…QKILMALSCN (124 aa)). Residues 76–98 (GHMEAYDHSPKTCAERELKEETG) carry the Nudix box motif. Residues glutamate 92, glutamate 96, and aspartate 138 each contribute to the Mg(2+) site.

The protein belongs to the Nudix hydrolase family. Mg(2+) serves as cofactor. Mn(2+) is required as a cofactor.

The sequence is that of Putative hydrolase 111R from Aedes vexans (Inland floodwater mosquito).